The chain runs to 240 residues: Protein GrpE (240 aa).

The span at M1–Q13 shows a compositional bias: polar residues. A disordered region spans residues M1–W89. Residues A20–A38 are compositionally biased toward low complexity. The span at E65–W89 shows a compositional bias: basic and acidic residues.

The protein belongs to the GrpE family. As to quaternary structure, homodimer.

It is found in the cytoplasm. Participates actively in the response to hyperosmotic and heat shock by preventing the aggregation of stress-denatured proteins, in association with DnaK and GrpE. It is the nucleotide exchange factor for DnaK and may function as a thermosensor. Unfolded proteins bind initially to DnaJ; upon interaction with the DnaJ-bound protein, DnaK hydrolyzes its bound ATP, resulting in the formation of a stable complex. GrpE releases ADP from DnaK; ATP binding to DnaK triggers the release of the substrate protein, thus completing the reaction cycle. Several rounds of ATP-dependent interactions between DnaJ, DnaK and GrpE are required for fully efficient folding. The chain is Protein GrpE from Halorhodospira halophila (strain DSM 244 / SL1) (Ectothiorhodospira halophila (strain DSM 244 / SL1)).